We begin with the raw amino-acid sequence, 275 residues long: ADP-dependent (S)-NAD(P)H-hydrate dehydratase (275 aa).

Positions 5–273 (TDEILAKVIK…EEIPLFMKKY (269 aa)) constitute a YjeF C-terminal domain. Positions 40, 103, and 151 each coordinate (6S)-NADPHX. Gly214 serves as a coordination point for AMP. Asp215 lines the (6S)-NADPHX pocket.

The protein belongs to the NnrD/CARKD family. Homotetramer. It depends on Mg(2+) as a cofactor.

The catalysed reaction is (6S)-NADHX + ADP = AMP + phosphate + NADH + H(+). It carries out the reaction (6S)-NADPHX + ADP = AMP + phosphate + NADPH + H(+). Its function is as follows. Catalyzes the dehydration of the S-form of NAD(P)HX at the expense of ADP, which is converted to AMP. Together with NAD(P)HX epimerase, which catalyzes the epimerization of the S- and R-forms, the enzyme allows the repair of both epimers of NAD(P)HX, a damaged form of NAD(P)H that is a result of enzymatic or heat-dependent hydration. The polypeptide is ADP-dependent (S)-NAD(P)H-hydrate dehydratase (Lactococcus lactis subsp. lactis (strain IL1403) (Streptococcus lactis)).